A 340-amino-acid polypeptide reads, in one-letter code: MEENKRKSLENALKTIEKEFGKGAVMRLGEMPKLQVDVIPTGSLGLDLALGIGGIPRGRVTEIFGPESGGKTTLALTIIAQAQKGGGVAAFVDAEHALDPLYAKKLGVDVQELLVSQPDTGEQALEIVELLARSGAVDVIVVDSVAALVPKAEIEGEMGDQHVGLQARLMSQALRKLTAVLSKSNTAAIFINQVREKVGVMYGNPETTPGGRALKFYSSVRLDVRKSGQPIKVGNEAVGIKVKVKVVKNKLAPPFREAELEIYFGRGLDPVMDLVNVAVAAGVIEKAGSWFSYGEHRLGQGKEKAAEYLRERPELLEEIRAKVLERADKVVLAAGEEEGE.

65-72 (GPESGGKT) is a binding site for ATP.

This sequence belongs to the RecA family.

It localises to the cytoplasm. Its function is as follows. Can catalyze the hydrolysis of ATP in the presence of single-stranded DNA, the ATP-dependent uptake of single-stranded DNA by duplex DNA, and the ATP-dependent hybridization of homologous single-stranded DNAs. It interacts with LexA causing its activation and leading to its autocatalytic cleavage. The polypeptide is Protein RecA (Thermus aquaticus).